The following is a 329-amino-acid chain: Glycerol-3-phosphate dehydrogenase [NAD(P)+] (329 aa).

Positions 11, 30, and 103 each coordinate NADPH. Sn-glycerol 3-phosphate contacts are provided by K103, G132, and S134. A136 serves as a coordination point for NADPH. The sn-glycerol 3-phosphate site is built by K187, D240, S250, R251, and N252. K187 (proton acceptor) is an active-site residue. R251 provides a ligand contact to NADPH. 2 residues coordinate NADPH: V275 and E277.

Belongs to the NAD-dependent glycerol-3-phosphate dehydrogenase family.

It is found in the cytoplasm. The catalysed reaction is sn-glycerol 3-phosphate + NAD(+) = dihydroxyacetone phosphate + NADH + H(+). It carries out the reaction sn-glycerol 3-phosphate + NADP(+) = dihydroxyacetone phosphate + NADPH + H(+). It functions in the pathway membrane lipid metabolism; glycerophospholipid metabolism. Functionally, catalyzes the reduction of the glycolytic intermediate dihydroxyacetone phosphate (DHAP) to sn-glycerol 3-phosphate (G3P), the key precursor for phospholipid synthesis. In Nitrosomonas europaea (strain ATCC 19718 / CIP 103999 / KCTC 2705 / NBRC 14298), this protein is Glycerol-3-phosphate dehydrogenase [NAD(P)+].